Reading from the N-terminus, the 923-residue chain is RNA polymerase-associated protein RapA (923 aa).

The Helicase ATP-binding domain maps to 162–332; the sequence is EVGNRVNPRV…FARLRLLDPE (171 aa). Residue 175–182 participates in ATP binding; the sequence is DEVGLGKT. Residues 278–281 carry the DEAH box motif; the sequence is DEAH. One can recognise a Helicase C-terminal domain in the interval 443 to 597; that stretch reads KIDWLIDFLK…TCPMGMALFS (155 aa).

The protein belongs to the SNF2/RAD54 helicase family. RapA subfamily. In terms of assembly, interacts with the RNAP. Has a higher affinity for the core RNAP than for the holoenzyme. Its ATPase activity is stimulated by binding to RNAP.

Its function is as follows. Transcription regulator that activates transcription by stimulating RNA polymerase (RNAP) recycling in case of stress conditions such as supercoiled DNA or high salt concentrations. Probably acts by releasing the RNAP, when it is trapped or immobilized on tightly supercoiled DNA. Does not activate transcription on linear DNA. Probably not involved in DNA repair. This Haemophilus influenzae (strain PittEE) protein is RNA polymerase-associated protein RapA.